A 393-amino-acid polypeptide reads, in one-letter code: Beta-1,4-galactosyltransferase 3 (393 aa).

Residues Met-1–Cys-10 are Cytoplasmic-facing. The chain crosses the membrane as a helical; Signal-anchor for type II membrane protein span at residues Thr-11–Phe-31. Residues Arg-32–His-393 lie on the Lumenal side of the membrane. Asn-57 carries an N-linked (GlcNAc...) asparagine glycan. An intrachain disulfide couples Cys-77 to Cys-119. Pro-130 to Arg-134 is a UDP-alpha-D-galactose binding site. The N-linked (GlcNAc...) asparagine glycan is linked to Asn-166. UDP-alpha-D-galactose contacts are provided by residues Phe-169–Arg-171, Val-196–Asp-197, Tyr-226, and Trp-258. A disulfide bridge connects residues Cys-190 and Cys-209. Asp-197 contacts Mn(2+). Residue Gly-260–Asp-263 participates in N-acetyl-D-glucosamine binding. Residue His-291 coordinates Mn(2+). Position 291 to 293 (His-291 to Gly-293) interacts with UDP-alpha-D-galactose. Arg-303 is a binding site for N-acetyl-D-glucosamine. N-linked (GlcNAc...) asparagine glycosylation is found at Asn-337 and Asn-385. The tract at residues Thr-339–His-393 is disordered.

It belongs to the glycosyltransferase 7 family. Mn(2+) is required as a cofactor. As to expression, found in various tissues. Highest expression in placenta, prostate, testis, ovary, intestine and muscle, and in fetal brain.

It localises to the golgi apparatus. It is found in the golgi stack membrane. It carries out the reaction an N-acetyl-beta-D-glucosaminyl derivative + UDP-alpha-D-galactose = a beta-D-galactosyl-(1-&gt;4)-N-acetyl-beta-D-glucosaminyl derivative + UDP + H(+). The catalysed reaction is N-acetyl-D-glucosamine + UDP-alpha-D-galactose = beta-D-galactosyl-(1-&gt;4)-N-acetyl-D-glucosamine + UDP + H(+). The enzyme catalyses a beta-D-GlcNAc-(1-&gt;3)-beta-D-Gal-(1-&gt;4)-beta-D-Glc-(1&lt;-&gt;1)-Cer(d18:1(4E)) + UDP-alpha-D-galactose = a neolactoside nLc4Cer(d18:1(4E)) + UDP + H(+). It catalyses the reaction a beta-D-glucosylceramide + UDP-alpha-D-galactose = a beta-D-galactosyl-(1-&gt;4)-beta-D-glucosyl-(1&lt;-&gt;1)-ceramide + UDP + H(+). It carries out the reaction a neolactoside IV(3)-beta-GlcNAc-nLc4Cer + UDP-alpha-D-galactose = a neolactoside nLc6Cer + UDP + H(+). It functions in the pathway protein modification; protein glycosylation. Functionally, responsible for the synthesis of complex-type N-linked oligosaccharides in many glycoproteins as well as the carbohydrate moieties of glycolipids. This is Beta-1,4-galactosyltransferase 3 from Homo sapiens (Human).